The chain runs to 523 residues: Glycerate kinase (523 aa).

Ser-60 is subject to Phosphoserine. Position 200 is an N6-acetyllysine (Lys-200).

Belongs to the glycerate kinase type-2 family. In terms of tissue distribution, expressed in the hippocampus, callus, brain, cerebellum, renal cortex interstitial cells, epithelium of interlobular bile duct and skeletal muscle.

It localises to the cytoplasm. The catalysed reaction is (R)-glycerate + ATP = (2R)-3-phosphoglycerate + ADP + H(+). The polypeptide is Glycerate kinase (Glyctk) (Mus musculus (Mouse)).